We begin with the raw amino-acid sequence, 577 residues long: Putative pseudouridine synthase B0024.11 (577 aa).

The active-site Nucleophile is the Asp-188. The TRUD domain occupies 265–472 (GFINYFGTQR…GESSRCLFVE (208 aa)). Basic and acidic residues predominate over residues 538-565 (KAMRDASFKTRGDDEKTEENVLEEKGSD). Residues 538 to 577 (KAMRDASFKTRGDDEKTEENVLEEKGSDDANELNLVSEDQ) are disordered.

The protein belongs to the pseudouridine synthase TruD family.

It catalyses the reaction a uridine in tRNA = a pseudouridine in tRNA. The protein is Putative pseudouridine synthase B0024.11 of Caenorhabditis elegans.